Reading from the N-terminus, the 572-residue chain is Bilirubin oxidase (572 aa).

The first 19 residues, 1 to 19 (MFKHTLGAAALSLLFNSNA), serve as a signal peptide directing secretion. The propeptide occupies 20 to 38 (VQASPVPETSPATGHLFKR). 2 consecutive Plastocyanin-like domains span residues 98 to 194 (VGYD…YMLT) and 404 to 526 (VAFA…VFVD). Residues H132, H134, H172, H174, H436, H439, H441, H494, C495, H496, H500, and M505 each coordinate Cu cation. N-linked (GlcNAc...) asparagine glycans are attached at residues N510 and N520.

Belongs to the multicopper oxidase family. The cofactor is Cu cation.

The enzyme catalyses 2 (4Z,15Z)-bilirubin IXalpha + O2 = 2 biliverdin IXalpha + 2 H2O. Oxidation of bilirubin and other tetrapyrroles. This chain is Bilirubin oxidase, found in Albifimbria verrucaria (Myrothecium leaf spot and pod blight fungus).